The primary structure comprises 159 residues: C-type lectin 1 (159 aa).

The N-terminal stretch at 1–23 is a signal peptide; sequence MGRFIFISFGLLVVFFFLSGAKG. 4 disulfides stabilise this stretch: cysteine 26-cysteine 37, cysteine 54-cysteine 155, cysteine 61-cysteine 157, and cysteine 130-cysteine 147. Residues 33-156 form the C-type lectin domain; that stretch reads MYGLCYKIFD…CKVKNAFLCQ (124 aa). An N-linked (GlcNAc...) asparagine glycan is attached at asparagine 118. Positions 119 to 121 match the Sugar-binding motif; the sequence is LTD. Aspartate 121, aspartate 127, and asparagine 143 together coordinate Ca(2+).

It belongs to the true venom lectin family. Homodimer; disulfide-linked. In terms of tissue distribution, expressed by the venom gland.

It is found in the secreted. Lectin which recognizes specific carbohydrate structures and agglutinates a variety of animal cells by binding to cell-surface glycoproteins and glycolipids. May be a calcium-dependent lectin. The chain is C-type lectin 1 from Bitis gabonica (Gaboon adder).